Consider the following 94-residue polypeptide: Putative pterin-4-alpha-carbinolamine dehydratase (94 aa).

The protein belongs to the pterin-4-alpha-carbinolamine dehydratase family.

It carries out the reaction (4aS,6R)-4a-hydroxy-L-erythro-5,6,7,8-tetrahydrobiopterin = (6R)-L-erythro-6,7-dihydrobiopterin + H2O. This chain is Putative pterin-4-alpha-carbinolamine dehydratase, found in Mycolicibacterium smegmatis (strain ATCC 700084 / mc(2)155) (Mycobacterium smegmatis).